We begin with the raw amino-acid sequence, 483 residues long: ATP-dependent RNA helicase DDX25 (483 aa).

The Nuclear export signal signature appears at 61-74 (LAANSLLNKLIHQS). The Q motif signature appears at 97-125 (KTFEELRLKEELLKGIYAMGFNRPSKIQE). Positions 100–114 (EELRLKEELLKGIYA) match the Nuclear localization signal motif. Residues 130–300 (MMLAHPPQNL…ERIIPDPNVI (171 aa)) enclose the Helicase ATP-binding domain. ATP is bound at residue 143–150 (SQSGTGKT). Positions 247 to 250 (DEAD) match the DEAD box motif. Residues 311-478 (NIRQYYVLCE…QLNAEDMDEI (168 aa)) enclose the Helicase C-terminal domain.

The protein belongs to the DEAD box helicase family. In terms of processing, phosphorylated on threonine residues. The phosphorylated form is found in the cytoplasm but not in the nucleus. As to expression, highly expressed in the Leydig and germ cells of the testis and weakly expressed in the pituitary and hypothalamus.

It localises to the cytoplasm. The protein localises to the nucleus. The enzyme catalyses ATP + H2O = ADP + phosphate + H(+). Functionally, ATP-dependent RNA helicase. Required for mRNA export and translation regulation during spermatid development. This Homo sapiens (Human) protein is ATP-dependent RNA helicase DDX25 (DDX25).